An 805-amino-acid polypeptide reads, in one-letter code: RFX-like transcription factor daf-19 (805 aa).

Residues 1 to 14 (MTNEEPVPSTSSVL) show a composition bias toward polar residues. Positions 1–113 (MTNEEPVPST…TPRKKMEPED (113 aa)) are disordered. Over residues 19 to 92 (KNVKIETPSR…DSKSLSKETH (74 aa)) the composition is skewed to basic and acidic residues. Polar residues predominate over residues 93-104 (NTISTRSSSSGT). Residues 260-334 (TVNWLFENYE…YHYYGIRLKD (75 aa)) constitute a DNA-binding region (RFX-type winged-helix).

This sequence belongs to the RFX family. Ciliated sensory neurons. As to expression, expressed in the male tail HOB and RnB neurons but not in male-specific CEM head neurons or other ciliated neurons.

It is found in the nucleus. Its function is as follows. Probable transcription factor. May regulate some genes of ciliated sensory neurons. May activate the expression of the shared components of sensory cilia, but not the cell-type-specific expression. Together with transcription factor atf-7, involved in regulation of the serotonergic response of ADF neurons to pathogenic food. Involved in male mating behavior; may play a role in functional specialization of PKD ciliated sensory neurons. This Caenorhabditis elegans protein is RFX-like transcription factor daf-19.